A 1076-amino-acid chain; its full sequence is DNA-directed RNA polymerase subunit beta (1076 aa).

It belongs to the RNA polymerase beta chain family. As to quaternary structure, in plastids the minimal PEP RNA polymerase catalytic core is composed of four subunits: alpha, beta, beta', and beta''. When a (nuclear-encoded) sigma factor is associated with the core the holoenzyme is formed, which can initiate transcription.

Its subcellular location is the plastid. The protein resides in the chloroplast. The catalysed reaction is RNA(n) + a ribonucleoside 5'-triphosphate = RNA(n+1) + diphosphate. Functionally, DNA-dependent RNA polymerase catalyzes the transcription of DNA into RNA using the four ribonucleoside triphosphates as substrates. This Triticum aestivum (Wheat) protein is DNA-directed RNA polymerase subunit beta.